The sequence spans 300 residues: Mitochondrial tricarboxylate transporter 1 (300 aa).

Solcar repeat units follow at residues 8-98 (VSPS…FRSM), 107-197 (LSNS…LRDW), and 209-294 (INWL…VVWL). A run of 6 helical transmembrane segments spans residues 11-31 (SVSV…TFPI), 67-87 (PKGL…KAGV), 114-134 (LAGM…SETI), 172-191 (GVVP…LGTY), 208-228 (LINW…AVYG), and 277-297 (LIVS…LLAG).

This sequence belongs to the mitochondrial carrier (TC 2.A.29) family.

Its subcellular location is the mitochondrion membrane. In terms of biological role, mitochondrial tricarboxylate transporter; part of the gene cluster that mediates the biosynthesis of itaconic acid and 2-hydroxyparaconate. Cis-aconitate is secreted by the mitochondrial tricarboxylate transporter MTT1. In the cytosol cis-aconitate is converted into trans-aconitate via isomerization by the aconitate-delta-isomerase ADI1. Decarboxylation of trans-aconitate by the trans-aconitate decarboxylase TAD1 then leads then to the production of itaconic acid. The cytochrome P450 monooxygenase CYP3 further converts itaconate to 2-hydroxyparaconate via oxidation of the double bond, leading to a transient epoxide, which can subsequently be lactonized to produce 2-hydroxyparaconate. Secretion of itaconate and possibly 2-hydroxyparaconate into the medium is mediated by the major facilitator ITP1. The glyoxalase domain-containing protein RDO1 is not involved in the biosynthesis of itaconate and 2-hydroxyparaconate, however, it might play a role in the further conversion of 2-hydroxyparaconate to itatartarate. This chain is Mitochondrial tricarboxylate transporter 1, found in Mycosarcoma maydis (Corn smut fungus).